A 449-amino-acid chain; its full sequence is Type 3 secretion system ATPase (449 aa).

178–183 contacts ATP; the sequence is GCGKTT.

This sequence belongs to the ATPase alpha/beta chains family. T3SS ATPase subfamily. The core secretion machinery of the T3SS is composed of approximately 20 different proteins, including cytoplasmic components, a base, an export apparatus and a needle. This subunit is part of the cytosolic complex. Forms homododecamers. Comprises two hexameric rings that are probably stacked face-to-face by the association of their C-terminal domains. Also present as monomer and homohexamer in solution.

It is found in the cytoplasm. It carries out the reaction ATP + H2O + cellular proteinSide 1 = ADP + phosphate + cellular proteinSide 2.. Oligomerization increases ATPase activity. Its function is as follows. ATPase component of the type III secretion system (T3SS), also called injectisome, which is used to inject bacterial effector proteins into eukaryotic host cells. Acts as a molecular motor to provide the energy that is required for the export of proteins. Required for type III secretion apparatus (T3SA) formation, proper protein secretion, host cell invasion and virulence. May play a critical role in T3SS substrate recognition, disassembly of the effector/chaperone complex and unfolding of the effector in an ATP-dependent manner prior to secretion. This chain is Type 3 secretion system ATPase, found in Pseudomonas savastanoi pv. phaseolicola (Pseudomonas syringae pv. phaseolicola).